Reading from the N-terminus, the 1819-residue chain is Protein REDUCED CHLOROPLAST COVERAGE 2 (1819 aa).

The segment covering 1 to 17 (MAPKAGKTKPHKSKGEK) has biased composition (basic residues). Disordered stretches follow at residues 1-23 (MAPKAGKTKPHKSKGEKKKKEEK), 128-180 (KPPV…GACE), 595-619 (QASSKSESKKTEDPKPEPAVKGLGK), and 634-664 (KANKTEQGKEAPANDTDNTSETEDQKELEKQ). Basic and acidic residues-rich tracts occupy residues 135-145 (LPKDSEKKESG) and 600-612 (SESKKTEDPKPEP). The region spanning 329–603 (EDETWGGDGG…NQASSKSESK (275 aa)) is the Clu domain. Positions 649 to 680 (TDNTSETEDQKELEKQNEEIEKMWKELVTETA) form a coiled coil. 5 TPR repeats span residues 892–925 (GRTLLESSKTSLDKGKLEDAVNYGTKALAKLVAV), 934–967 (AGAYSLLAVVLYHTGDFNQATIYQQKALDINERE), 976–1009 (MKSYGDLAVFYYRLQHTELALKYVNRALYLLHLT), 1018–1051 (AATYINVAMMEEGMKNAHVALRYLHEALKCNQRL), and 1060–1093 (AASYHAIAIALSLMDAYSLSVQHEQTTLQILQAK). Disordered stretches follow at residues 1152–1360 (SGIK…PMLS), 1413–1456 (KVNA…SPKE), 1468–1513 (KAFP…SESV), 1527–1573 (LKTV…ASAP), 1616–1670 (STPH…PRIM), and 1731–1809 (LVSE…DYSD). Basic and acidic residues-rich tracts occupy residues 1199-1224 (SSDKENKSETKSEEKKVENFDLEQSK) and 1230-1239 (KLVKPEATVH). Serine 1244 bears the Phosphoserine mark. Over residues 1269–1313 (KLNTNFMNVTQQPSRSRGKSTNFTSPRTSSNELSISVAGSTSSPA) the composition is skewed to polar residues. Serine 1320 carries the post-translational modification Phosphoserine. A compositionally biased stretch (polar residues) spans 1343–1354 (LASSACTEQINK). 2 stretches are compositionally biased toward polar residues: residues 1496–1511 (CLLNKSPTANDSNGSE) and 1536–1546 (NLPNGDSSPKS). Over residues 1551–1566 (DGEKQDACEAQKEMSK) the composition is skewed to basic and acidic residues. Polar residues predominate over residues 1650 to 1665 (SFPNSTESNGEANQFN). A compositionally biased stretch (basic and acidic residues) spans 1742 to 1759 (SEEKSGSEEESNNDKNAG). Polar residues predominate over residues 1767 to 1778 (QETTDTPENGHS). The segment covering 1785 to 1800 (TTSHETCDEKNGERQG) has biased composition (basic and acidic residues).

Expressed in the non-epidermal tissues of the true leaves. Not detected in the vegetative shoot meristem and leaf primordia.

It localises to the nucleus. Its subcellular location is the cytoplasm. The protein resides in the cytosol. Functionally, negatively regulates meristematic tissue proliferation by integrating developmental signals with carbon source availability. May act as the scaffold of a protein complex, which sequesters key factors that are required for the G2 to M transition in meristematic tissues. Together with REC2, REC3 and FMT/CLU, contributes to the establishment of the cellular volume devoted to the chloroplast compartment. The protein is Protein REDUCED CHLOROPLAST COVERAGE 2 of Arabidopsis thaliana (Mouse-ear cress).